The chain runs to 175 residues: Inorganic pyrophosphatase (175 aa).

Substrate contacts are provided by lysine 29, arginine 43, and tyrosine 55. 3 residues coordinate Mg(2+): aspartate 65, aspartate 70, and aspartate 102. Tyrosine 141 lines the substrate pocket.

It belongs to the PPase family. In terms of assembly, homohexamer. Mg(2+) serves as cofactor.

It is found in the cytoplasm. The catalysed reaction is diphosphate + H2O = 2 phosphate + H(+). Its function is as follows. Catalyzes the hydrolysis of inorganic pyrophosphate (PPi) forming two phosphate ions. This Rickettsia bellii (strain RML369-C) protein is Inorganic pyrophosphatase.